We begin with the raw amino-acid sequence, 116 residues long: Heme-degrading monooxygenase (116 aa).

Positions 2–92 (VIVTNTSKIT…EYILENKISF (91 aa)) constitute an ABM domain. N6 is a Fe cation binding site. H76 provides a ligand contact to heme.

This sequence belongs to the antibiotic biosynthesis monooxygenase family. Heme-degrading monooxygenase IsdG subfamily. As to quaternary structure, homodimer.

It is found in the cytoplasm. The catalysed reaction is heme b + 3 reduced [NADPH--hemoprotein reductase] + 3 O2 = biliverdin IXalpha + CO + Fe(2+) + 3 oxidized [NADPH--hemoprotein reductase] + 3 H2O + H(+). Allows bacterial pathogens to use the host heme as an iron source. Catalyzes the oxidative degradation of the heme macrocyclic porphyrin ring to the biliverdin in the presence of a suitable electron donor such as ascorbate or NADPH--cytochrome P450 reductase, with subsequent release of free iron. The sequence is that of Heme-degrading monooxygenase from Halalkalibacterium halodurans (strain ATCC BAA-125 / DSM 18197 / FERM 7344 / JCM 9153 / C-125) (Bacillus halodurans).